Reading from the N-terminus, the 440-residue chain is Beta-1,3-galactosyl-O-glycosyl-glycoprotein beta-1,6-N-acetylglucosaminyltransferase (440 aa).

Residues 1 to 9 lie on the Cytoplasmic side of the membrane; that stretch reads MKMAGWKKK. Residues 10 to 30 traverse the membrane as a helical; Signal-anchor for type II membrane protein segment; that stretch reads LCPGHHLWALGCYMLLAVVSL. Over 31–440 the chain is Lumenal; sequence RLSLRFKCDV…RHKAIYGTEL (410 aa). 2 N-linked (GlcNAc...) asparagine; by host glycosylation sites follow: Asn-72 and Asn-108. Intrachain disulfides connect Cys-73-Cys-230, Cys-164-Cys-384, Cys-185-Cys-212, and Cys-393-Cys-425.

Belongs to the glycosyltransferase 14 family.

The protein localises to the host Golgi apparatus membrane. It catalyses the reaction a 3-O-[beta-D-galactosyl-(1-&gt;3)-N-acetyl-alpha-D-galactosaminyl]-L-seryl-[protein] + UDP-N-acetyl-alpha-D-glucosamine = 3-O-{beta-D-galactosyl-(1-&gt;3)-[N-acetyl-beta-D-glucosaminyl-(1-&gt;6)]-N-acetyl-alpha-D-galactosaminyl}-L-seryl-[protein] + UDP + H(+). The enzyme catalyses a 3-O-[beta-D-galactosyl-(1-&gt;3)-N-acetyl-alpha-D-galactosaminyl]-L-threonyl-[protein] + UDP-N-acetyl-alpha-D-glucosamine = a 3-O-{beta-D-galactosyl-(1-&gt;3)-[N-acetyl-beta-D-glucosaminyl-(1-&gt;6)]-N-acetyl-alpha-D-galactosaminyl}-L-threonyl-[protein] + UDP + H(+). The catalysed reaction is a beta-D-Gal-(1-&gt;4)-beta-D-GlcNAc-(1-&gt;3)-beta-D-Gal-(1-&gt;4)-beta-D-GlcNAc derivative + UDP-N-acetyl-alpha-D-glucosamine = a beta-D-Gal-(1-&gt;4)-beta-D-GlcNAc-(1-&gt;3)-[beta-D-GlcNAc-(1-&gt;6)]-beta-D-Gal-(1-&gt;4)-N-acetyl-beta-D-glucosaminyl derivative + UDP + H(+). It carries out the reaction 3-O-[N-acetyl-beta-D-glucosaminyl-(1-&gt;3)-N-acetyl-alpha-D-galactosaminyl]-L-seryl-[protein] + UDP-N-acetyl-alpha-D-glucosamine = 3-O-[N-acetyl-beta-D-glucosaminyl-(1-&gt;3)-[N-acetyl-beta-D-glucosaminyl-(1-&gt;6)]-N-acetyl-alpha-D-galactosaminyl]-L-seryl-[protein] + UDP + H(+). It catalyses the reaction a 3-O-[N-acetyl-beta-D-glucosaminyl-(1-&gt;3)-N-acetyl-alpha-D-galactosaminyl]-L-threonyl-[protein] + UDP-N-acetyl-alpha-D-glucosamine = 3-O-[N-acetyl-beta-D-glucosaminyl-(1-&gt;3)-[N-acetyl-beta-D-glucosaminyl-(1-&gt;6)]-N-acetyl-alpha-D-galactosaminyl]-L-threonyl-[protein] + UDP + H(+). The protein operates within protein modification; protein glycosylation. In terms of biological role, non-essential glycosyltransferase that can synthesize all known mucin beta 6 N-acetylglucosaminides. Mediates core 2 and core 4 O-glycan branching, 2 important steps in mucin-type biosynthesis. Has also I-branching enzyme activity by converting linear into branched poly-N-acetyllactosaminoglycans. Contributes to the post-translational modifications of structural proteins. In Bovine herpesvirus 4 (strain LVR140) (BoHV-4), this protein is Beta-1,3-galactosyl-O-glycosyl-glycoprotein beta-1,6-N-acetylglucosaminyltransferase (Bo17).